Consider the following 572-residue polypeptide: Far upstream element-binding protein 3 (572 aa).

The residue at position 2 (Ala-2) is an N-acetylalanine. Glycyl lysine isopeptide (Lys-Gly) (interchain with G-Cter in SUMO2) cross-links involve residues Lys-15 and Lys-57. The residue at position 76 (Thr-76) is a Phosphothreonine. KH domains follow at residues 77 to 141 (VITE…KRLL), 162 to 228 (STIQ…REMV), 253 to 317 (GGSI…AHII), and 354 to 421 (VQEI…RQLI). Ser-296 is subject to Phosphoserine. Residues 426–521 (GGTNLGAPGA…SQPNYSKAWE (96 aa)) are disordered. Positions 496-514 (QQPTQQVPSQQSQPQSSQP) are enriched in low complexity. Phosphoserine is present on residues Ser-539 and Ser-569.

In terms of tissue distribution, detected in a number of cell lines.

It localises to the nucleus. Its function is as follows. May interact with single-stranded DNA from the far-upstream element (FUSE). May activate gene expression. This Homo sapiens (Human) protein is Far upstream element-binding protein 3 (FUBP3).